The sequence spans 274 residues: Penicillin-insensitive murein endopeptidase (274 aa).

The N-terminal stretch at 1–19 is a signal peptide; that stretch reads MKKTAIALLAWFVSSASLA. 3 cysteine pairs are disulfide-bonded: cysteine 44-cysteine 265, cysteine 187-cysteine 235, and cysteine 216-cysteine 223. Histidine 110, histidine 113, aspartate 120, aspartate 147, histidine 150, and histidine 211 together coordinate Zn(2+). The disordered stretch occupies residues 225 to 274; sequence DQPLPPPGDGCGAELQSWFEPPKLGTTKPEKKTPPPLPPSCQALLDEHVL.

This sequence belongs to the peptidase M74 family. As to quaternary structure, dimer. Requires Zn(2+) as cofactor.

The protein resides in the periplasm. Functionally, murein endopeptidase that cleaves the D-alanyl-meso-2,6-diamino-pimelyl amide bond that connects peptidoglycan strands. Likely plays a role in the removal of murein from the sacculus. This is Penicillin-insensitive murein endopeptidase from Salmonella paratyphi B (strain ATCC BAA-1250 / SPB7).